A 401-amino-acid polypeptide reads, in one-letter code: Probable E3 ubiquitin-protein ligase RHC2A (401 aa).

Residues 41–93 (TPSDSFTTTTTTQHRSPTRFPPPSSSSSTPSASMHADNSPTPTIVTRTRSNRS) form a disordered region. Over residues 76–93 (ADNSPTPTIVTRTRSNRS) the composition is skewed to polar residues. The RING-type; atypical zinc finger occupies 201–242 (CAVCKENFVLKSSAREMPCNHIYHPDCILPWLAIRNSCPVCR).

The catalysed reaction is S-ubiquitinyl-[E2 ubiquitin-conjugating enzyme]-L-cysteine + [acceptor protein]-L-lysine = [E2 ubiquitin-conjugating enzyme]-L-cysteine + N(6)-ubiquitinyl-[acceptor protein]-L-lysine.. The protein operates within protein modification; protein ubiquitination. Probable E3 ubiquitin-protein ligase that may possess E3 ubiquitin ligase activity in vitro. This Arabidopsis thaliana (Mouse-ear cress) protein is Probable E3 ubiquitin-protein ligase RHC2A.